Consider the following 160-residue polypeptide: Type IV major fimbrial protein FimA (160 aa).

A propeptide spans 1 to 7 (MKSLQKG) (leader sequence). N-methylphenylalanine is present on Phe8. The helical transmembrane segment at 8–28 (FTLIELMIVVAIIGILAAFAI) threads the bilayer. Cys63 and Cys105 form a disulfide bridge.

The protein belongs to the N-Me-Phe pilin family. The pili are polar flexible filaments of about 5.4 nanometers diameter and 2.5 micrometers average length; they consist of only a single polypeptide chain arranged in a helical configuration of five subunits per turn in the assembled pilus.

The protein resides in the fimbrium. It is found in the membrane. In terms of biological role, major component of the type IV fimbriae that plays an essential role in twitching motility, natural transformation, and protease secretion. This is Type IV major fimbrial protein FimA (fimA) from Dichelobacter nodosus (Bacteroides nodosus).